The primary structure comprises 562 residues: Probable ganciclovir kinase (562 aa).

Over residues 1–16 (MDNGVETPQGQKTQPI) the composition is skewed to polar residues. Residues 1-32 (MDNGVETPQGQKTQPINLPPVRKKLRKHEGLG) form a disordered region. Residues 201-209 (LGVGAYGKV) and lysine 218 each bind ATP. The Proton acceptor role is filled by aspartate 313.

Belongs to the protein kinase superfamily. Tyr protein kinase family. HCMV ganciclovir subfamily.

Its function is as follows. Phosphorylates the antiviral nucleoside analog ganciclovir. The chain is Probable ganciclovir kinase (U69) from Homo sapiens (Human).